A 629-amino-acid polypeptide reads, in one-letter code: tRNA uridine 5-carboxymethylaminomethyl modification enzyme MnmG (629 aa).

Residue 13 to 18 (GGGHAG) coordinates FAD. 273 to 287 (GPRYCPSIEDKIHRF) contributes to the NAD(+) binding site.

This sequence belongs to the MnmG family. In terms of assembly, homodimer. Heterotetramer of two MnmE and two MnmG subunits. FAD serves as cofactor.

It localises to the cytoplasm. In terms of biological role, NAD-binding protein involved in the addition of a carboxymethylaminomethyl (cmnm) group at the wobble position (U34) of certain tRNAs, forming tRNA-cmnm(5)s(2)U34. This chain is tRNA uridine 5-carboxymethylaminomethyl modification enzyme MnmG, found in Shewanella baltica (strain OS223).